The sequence spans 59 residues: MDKKLLEILVCPLCKGKLLFKKHELICKFDRLAFPVRDDIPVMLEQEARLIPLEEKDKL.

This sequence belongs to the UPF0434 family.

The sequence is that of UPF0434 protein lpl1884 from Legionella pneumophila (strain Lens).